A 350-amino-acid chain; its full sequence is Xylene/toluene monooxygenase electron transfer component XylA (350 aa).

Residues 16–108 (PESTVSVRGQ…DLEIELDTVL (93 aa)) enclose the 2Fe-2S ferredoxin-type domain. The [2Fe-2S] cluster site is built by Cys52, Cys57, Cys60, and Cys92. Residues 109-350 (GQALVPIETS…ADRFYNRPPC (242 aa)) form a ferredoxin--NADH reductase region. The 100-residue stretch at 114–213 (PIETSALISK…RAPYGQFGLH (100 aa)) folds into the FAD-binding FR-type domain.

This sequence belongs to the bacterial ring-hydroxylating dioxygenase ferredoxin reductase family. In terms of assembly, monomer. The xylene/toluene monooxygenase is composed of two subunits: the electron transfer component XylA and the hydroxylase component XylM. FAD is required as a cofactor. It depends on [2Fe-2S] cluster as a cofactor.

The protein resides in the cell inner membrane. It catalyses the reaction 2 reduced [2Fe-2S]-[ferredoxin] + NAD(+) + H(+) = 2 oxidized [2Fe-2S]-[ferredoxin] + NADH. Its activity is regulated as follows. The reductase activity is completely inhibited by quercetin (a common inhibitor of mammalian oxidoreductases) and p-chloromercuribenzoate, but not by iodoacetimide, N-ethylmaleimide and pyrrazole. In terms of biological role, component of a monooxygenase that catalyzes the first step in the degradation of xylenes and toluenes. XylA is responsible for the transport of electrons from the electron donor NADH to the terminal hydroxylase component, XylM. The protein is Xylene/toluene monooxygenase electron transfer component XylA of Pseudomonas putida (Arthrobacter siderocapsulatus).